Reading from the N-terminus, the 407-residue chain is Type II secretion system protein L (407 aa).

Residues 1-257 (MEGSVSEFLT…WLRYWQIWRK (257 aa)) are Cytoplasmic-facing. Residues 258–275 (VAIAAGLFVAVSISYSLF) traverse the membrane as a helical segment. At 276–407 (QAHQYEAQAD…VFGVFVVKPK (132 aa)) the chain is on the periplasmic side.

The protein belongs to the GSP L family. As to quaternary structure, type II secretion system is composed of four main components: the outer membrane complex, the inner membrane complex, the cytoplasmic secretion ATPase and the periplasm-spanning pseudopilus. Forms homodimers. Interacts with EpsM/GspM. Interacts with EpsE/GspE and EpsF/GspF.

The protein resides in the cell inner membrane. Functionally, inner membrane component of the type II secretion system required for the energy-dependent secretion of extracellular factors such as proteases and toxins from the periplasm. Plays a role in the complex assembly and recruits EpsM resulting in a stable complex in the inner membrane. Provides thus a link between the energy-providing EpsE protein in the cytoplasm and the rest of the T2SS machinery. This Vibrio cholerae serotype O1 (strain ATCC 39315 / El Tor Inaba N16961) protein is Type II secretion system protein L (epsL).